The chain runs to 82 residues: uncharacterized protein (82 aa).

Residues 60-82 (YKRRRPDHMMKRNSPSYTGDHKT) form a disordered region.

This is an uncharacterized protein from Saccharomyces cerevisiae (strain ATCC 204508 / S288c) (Baker's yeast).